Here is a 466-residue protein sequence, read N- to C-terminus: Soluble pyridine nucleotide transhydrogenase (466 aa).

Residue 36-45 (ERYHQVGGGC) participates in FAD binding.

Belongs to the class-I pyridine nucleotide-disulfide oxidoreductase family. FAD serves as cofactor.

It is found in the cytoplasm. The catalysed reaction is NAD(+) + NADPH = NADH + NADP(+). In terms of biological role, conversion of NADPH, generated by peripheral catabolic pathways, to NADH, which can enter the respiratory chain for energy generation. The chain is Soluble pyridine nucleotide transhydrogenase from Colwellia psychrerythraea (strain 34H / ATCC BAA-681) (Vibrio psychroerythus).